The primary structure comprises 620 residues: Aspartic protease 1 (620 aa).

The Cytoplasmic portion of the chain corresponds to 1–110; that stretch reads MSPSSRFRNL…LGKAVGLSTS (110 aa). Residues 1–258 constitute a propeptide that is removed on maturation; sequence MSPSSRFRNL…SKKDDGNLSG (258 aa). The important for proper cellular trafficking stretch occupies residues 27-31; that stretch reads YASLL. The helical; Signal-anchor for type II membrane protein transmembrane segment at 111–131 threads the bilayer; it reads VICVVALFGIVCLCLYGLVNF. At 132 to 620 the chain is on the lumenal side; that stretch reads SFTSVETSPL…KQIGFARLKN (489 aa). Residues 138-174 are disordered; that stretch reads TSPLDDPRNSPVMGELGNPQASTPSSARADTPARHDR. Positions 156–165 are enriched in polar residues; it reads PQASTPSSAR. Residues 275–616 form the Peptidase A1 domain; the sequence is YYTEIYVGSP…DYDNKQIGFA (342 aa). Active-site residues include Asp-293 and Asp-476. An intrachain disulfide couples Cys-513 to Cys-550.

Belongs to the peptidase A1 family. Post-translationally, proteolytically cleaved into the soluble active mature form by, at least, cysteine protease CPL. Undergoes at least four processing steps; the first cleavage removes the propeptide resulting in the production of a soluble 45 kDa protein, which is further processed into a 35 kDa form followed by an additional processing into the final active 30 kDa form.

The protein localises to the membrane. It is found in the vacuole. Aspartyl protease which is dispensable for protein degradation in the vacuolar compartment (VAC) or for tachyzoite and bradyzoite viability. The chain is Aspartic protease 1 from Toxoplasma gondii.